Reading from the N-terminus, the 188-residue chain is Elongation factor P-like protein (188 aa).

The protein belongs to the elongation factor P family.

The protein is Elongation factor P-like protein of Vibrio vulnificus (strain CMCP6).